Consider the following 230-residue polypeptide: Orotidine 5'-phosphate decarboxylase (230 aa).

Substrate contacts are provided by residues Asp10, Lys31, 58 to 67, Thr117, Arg179, Gln188, Gly208, and Arg209; that span reads DLKLHDIPNT. Catalysis depends on Lys60, which acts as the Proton donor. Residues 177–196 are disordered; it reads GIRPKDASSDDQKRITTPED. Residues 179-196 are compositionally biased toward basic and acidic residues; sequence RPKDASSDDQKRITTPED.

The protein belongs to the OMP decarboxylase family. Type 1 subfamily. As to quaternary structure, homodimer.

It carries out the reaction orotidine 5'-phosphate + H(+) = UMP + CO2. Its pathway is pyrimidine metabolism; UMP biosynthesis via de novo pathway; UMP from orotate: step 2/2. Its function is as follows. Catalyzes the decarboxylation of orotidine 5'-monophosphate (OMP) to uridine 5'-monophosphate (UMP). The chain is Orotidine 5'-phosphate decarboxylase from Staphylococcus saprophyticus subsp. saprophyticus (strain ATCC 15305 / DSM 20229 / NCIMB 8711 / NCTC 7292 / S-41).